Reading from the N-terminus, the 132-residue chain is Small ribosomal subunit protein uS8c (132 aa).

It belongs to the universal ribosomal protein uS8 family. In terms of assembly, part of the 30S ribosomal subunit.

Its subcellular location is the plastid. The protein resides in the chloroplast. Functionally, one of the primary rRNA binding proteins, it binds directly to 16S rRNA central domain where it helps coordinate assembly of the platform of the 30S subunit. The sequence is that of Small ribosomal subunit protein uS8c (rps8) from Dioscorea elephantipes (Elephant's foot yam).